The primary structure comprises 155 residues: Large ribosomal subunit protein uL30 (155 aa).

It belongs to the universal ribosomal protein uL30 family. In terms of assembly, part of the 50S ribosomal subunit.

The sequence is that of Large ribosomal subunit protein uL30 from Pyrococcus abyssi (strain GE5 / Orsay).